A 231-amino-acid polypeptide reads, in one-letter code: Probable septum site-determining protein MinC (231 aa).

The disordered stretch occupies residues 100–125; it reads EGKEKSPRPAPAPQAPAQNTTPVTKT.

Belongs to the MinC family. As to quaternary structure, interacts with MinD and FtsZ.

Its function is as follows. Cell division inhibitor that blocks the formation of polar Z ring septums. Rapidly oscillates between the poles of the cell to destabilize FtsZ filaments that have formed before they mature into polar Z rings. Prevents FtsZ polymerization. The protein is Probable septum site-determining protein MinC of Escherichia coli O81 (strain ED1a).